Here is a 443-residue protein sequence, read N- to C-terminus: Methyl-coenzyme M reductase I subunit beta (443 aa).

Tyr-367 contacts coenzyme M. Gly-369 provides a ligand contact to coenzyme B.

The protein belongs to the methyl-coenzyme M reductase beta subunit family. As to quaternary structure, MCR is a hexamer of two alpha, two beta, and two gamma chains, forming a dimer of heterotrimers. The cofactor is coenzyme F430.

It is found in the cytoplasm. The enzyme catalyses coenzyme B + methyl-coenzyme M = methane + coenzyme M-coenzyme B heterodisulfide. It functions in the pathway one-carbon metabolism; methyl-coenzyme M reduction; methane from methyl-coenzyme M: step 1/1. With respect to regulation, methyl-coenzyme M reductase activity is inhibited by 3-nitrooxypropanol (3-NOP) in vitro and in vivo, by oxidation of its active site Ni(I), which stops both growth and methanogenesis. Is also inhibited by the reaction product CoM-S-S-CoB. Functionally, component of the methyl-coenzyme M reductase (MCR) I that catalyzes the reductive cleavage of methyl-coenzyme M (CoM-S-CH3 or 2-(methylthio)ethanesulfonate) using coenzyme B (CoB or 7-mercaptoheptanoylthreonine phosphate) as reductant which results in the production of methane and the mixed heterodisulfide of CoB and CoM (CoM-S-S-CoB). This is the final step in methanogenesis. Neither N-6-mercaptohexanoylthreonine phosphate (H-S-HxoTP) nor N-8-mercaptooctanoylthreonine phosphate (H-SOcoTP) nor any other thiol compound such as CoA or CoM can substitute for CoB as the electron donor. The chain is Methyl-coenzyme M reductase I subunit beta (mcrB) from Methanothermobacter marburgensis (strain ATCC BAA-927 / DSM 2133 / JCM 14651 / NBRC 100331 / OCM 82 / Marburg) (Methanobacterium thermoautotrophicum).